The sequence spans 542 residues: Esterase S (542 aa).

The signal sequence occupies residues 1–22 (MTQILLPIALLCLFAASTLSNP). C81 and C100 are disulfide-bonded. N-linked (GlcNAc...) asparagine glycosylation is present at N110. S204 acts as the Acyl-ester intermediate in catalysis. Cysteines 256 and 268 form a disulfide. N-linked (GlcNAc...) asparagine glycosylation is present at N396. C507 and C528 form a disulfide bridge.

It belongs to the type-B carboxylesterase/lipase family. As to quaternary structure, monomer. Specifically expressed in the ejaculatory bulbs of male.

It localises to the secreted. It carries out the reaction a carboxylic ester + H2O = an alcohol + a carboxylate + H(+). Functionally, transferred from the ejaculatory bulbs of males to the female genitals upon copulation, plays an important role in the reproductive biology. The sequence is that of Esterase S (EstS) from Drosophila virilis (Fruit fly).